We begin with the raw amino-acid sequence, 71 residues long: Antitoxin ParD2 (71 aa).

Its function is as follows. Antitoxin component of a type II toxin-antitoxin (TA) system. This is Antitoxin ParD2 (parD2) from Mycobacterium tuberculosis (strain CDC 1551 / Oshkosh).